The primary structure comprises 258 residues: Small ribosomal subunit protein uS2 (258 aa).

The disordered stretch occupies residues 227–258 (GEQFAPASEQKEEVKTQEVQEVEDSNDDVIDD). A compositionally biased stretch (basic and acidic residues) spans 235–244 (EQKEEVKTQE). Over residues 246–258 (QEVEDSNDDVIDD) the composition is skewed to acidic residues.

It belongs to the universal ribosomal protein uS2 family.

This chain is Small ribosomal subunit protein uS2, found in Caldicellulosiruptor saccharolyticus (strain ATCC 43494 / DSM 8903 / Tp8T 6331).